The following is a 162-amino-acid chain: NAD(P)H-quinone oxidoreductase subunit N (162 aa).

The protein belongs to the complex I NdhN subunit family. NDH-1 can be composed of about 15 different subunits; different subcomplexes with different compositions have been identified which probably have different functions.

The protein localises to the cellular thylakoid membrane. It catalyses the reaction a plastoquinone + NADH + (n+1) H(+)(in) = a plastoquinol + NAD(+) + n H(+)(out). The enzyme catalyses a plastoquinone + NADPH + (n+1) H(+)(in) = a plastoquinol + NADP(+) + n H(+)(out). Functionally, NDH-1 shuttles electrons from an unknown electron donor, via FMN and iron-sulfur (Fe-S) centers, to quinones in the respiratory and/or the photosynthetic chain. The immediate electron acceptor for the enzyme in this species is believed to be plastoquinone. Couples the redox reaction to proton translocation, and thus conserves the redox energy in a proton gradient. Cyanobacterial NDH-1 also plays a role in inorganic carbon-concentration. The chain is NAD(P)H-quinone oxidoreductase subunit N from Nostoc sp. (strain PCC 7120 / SAG 25.82 / UTEX 2576).